Here is a 494-residue protein sequence, read N- to C-terminus: Aspartyl/glutamyl-tRNA(Asn/Gln) amidotransferase subunit B (494 aa).

This sequence belongs to the GatB/GatE family. GatB subfamily. As to quaternary structure, heterotrimer of A, B and C subunits.

The enzyme catalyses L-glutamyl-tRNA(Gln) + L-glutamine + ATP + H2O = L-glutaminyl-tRNA(Gln) + L-glutamate + ADP + phosphate + H(+). The catalysed reaction is L-aspartyl-tRNA(Asn) + L-glutamine + ATP + H2O = L-asparaginyl-tRNA(Asn) + L-glutamate + ADP + phosphate + 2 H(+). Its function is as follows. Allows the formation of correctly charged Asn-tRNA(Asn) or Gln-tRNA(Gln) through the transamidation of misacylated Asp-tRNA(Asn) or Glu-tRNA(Gln) in organisms which lack either or both of asparaginyl-tRNA or glutaminyl-tRNA synthetases. The reaction takes place in the presence of glutamine and ATP through an activated phospho-Asp-tRNA(Asn) or phospho-Glu-tRNA(Gln). The sequence is that of Aspartyl/glutamyl-tRNA(Asn/Gln) amidotransferase subunit B from Synechococcus elongatus (strain ATCC 33912 / PCC 7942 / FACHB-805) (Anacystis nidulans R2).